A 448-amino-acid polypeptide reads, in one-letter code: Phosphoglucosamine mutase (448 aa).

S101 acts as the Phosphoserine intermediate in catalysis. Residues S101, D241, D243, and D245 each coordinate Mg(2+). S101 is modified (phosphoserine).

This sequence belongs to the phosphohexose mutase family. Mg(2+) is required as a cofactor. Post-translationally, activated by phosphorylation.

It carries out the reaction alpha-D-glucosamine 1-phosphate = D-glucosamine 6-phosphate. Its function is as follows. Catalyzes the conversion of glucosamine-6-phosphate to glucosamine-1-phosphate. In Macrococcus caseolyticus (strain JCSC5402) (Macrococcoides caseolyticum), this protein is Phosphoglucosamine mutase.